The primary structure comprises 569 residues: Urease subunit alpha (569 aa).

In terms of domain architecture, Urease spans 131–569; sequence GAIDSHIHFI…LPLAQRYLLL (439 aa). Residues His-136, His-138, and Lys-219 each contribute to the Ni(2+) site. Position 219 is an N6-carboxylysine (Lys-219). Substrate is bound at residue His-221. Positions 248 and 274 each coordinate Ni(2+). Residue His-322 is the Proton donor of the active site. Position 362 (Asp-362) interacts with Ni(2+).

Belongs to the metallo-dependent hydrolases superfamily. Urease alpha subunit family. Heterotrimer of UreA (gamma), UreB (beta) and UreC (alpha) subunits. Three heterotrimers associate to form the active enzyme. Requires Ni cation as cofactor. In terms of processing, carboxylation allows a single lysine to coordinate two nickel ions.

Its subcellular location is the cytoplasm. The catalysed reaction is urea + 2 H2O + H(+) = hydrogencarbonate + 2 NH4(+). It participates in nitrogen metabolism; urea degradation; CO(2) and NH(3) from urea (urease route): step 1/1. This is Urease subunit alpha from Prochlorococcus marinus (strain NATL2A).